The chain runs to 995 residues: DNA polymerase (995 aa).

This sequence belongs to the DNA polymerase type-B family.

It catalyses the reaction DNA(n) + a 2'-deoxyribonucleoside 5'-triphosphate = DNA(n+1) + diphosphate. The chain is DNA polymerase (RF1) from Kluyveromyces lactis (strain ATCC 8585 / CBS 2359 / DSM 70799 / NBRC 1267 / NRRL Y-1140 / WM37) (Yeast).